We begin with the raw amino-acid sequence, 1460 residues long: MSDKEDEKQSQPVLKDDKQDQTEEPAIDDNVNGDEGPSDEEEGDDVFDSSEEDEDLDNDEEEAQKVREGFIVDDDEEGGEEDEVVKKKSRRKRRAREEENEALDEDDLDLLMENAGFKRPSASEAAKQRSGKLKRLKRVGDDEEESASAEPESEVARTNKLDDFFSEEEEEEELEDDGTGRAPSRKGVEKTVTLADDMDDFIEEDEFSDEDEEARKFRIAEKKRIKEQRLAQPTQITGLSPDKVDEMFEVFGDGHDYDWALELENEEELDRLEESSENEQDENELGIDSKRKKKLTLQDIYDLQDLKKNLLTEEDMNIRKADIPERYQELRTGLKNYGKLSPEDLELEKNWISDKIAVDKNFDADYDTTEFKEAIGNAINFIQQENLEVSFIYAYRRNYISSRSKDGFVLIEDDLWDIVFYDTEFHSIIYKRDYVKTFYEKLDIHDPIVDEYFSNQSMTELNSLQDIYDYVEFKYAQEINDVLLSTQQDATSKKHLKNSSYEKFKASALYQAINDTGITAEQVGENISAEHQLHPVVDHPSLKPTDSVANILEGPEAKDLQIFSQNPKLALETIEKYYALELSKNPKVRQKIRDDFYKYYIVDVALTSKGRKEIQRGSPYEDIKYALGRTPAHFRSEPDVFLRMLEAESLHLMNIQIHVSSQDQYTNHLFQTSLETSNTSEIASEWNSFRRDAFDSALNKVFSDVSQEIKDELKKTCLRLVTKSVRHQFMFKLDQAPFIPNPKDPKIPRVLTITCGQGKFGSDAIIAVYLNRKTEFVRDYKIVENPFDRKEPELFENALDDIIQHCQPNVIGINGPNPSTQRLYKKIQEIVQKKQIVDNRGSHVPVIYVEDEVAVRYQSSERAAQEFPSKPTLVKYCIALGRYIHSPLLEYANLTNEELLSLSIHSHQSLLTRELFLQALETSFVDIVNLVGIEVNKATDNHYYAKALRYIAGFGRRKSADFLESLQRLNEPLLARQQLITHDILTKTIFMNSAAFLYISWNEKNQRYEDLEHDQLDGTRIHPEDYHLATKVAADALEFDPDAIAEKEEQGTMSEFIELLREDPDRRTKLESLNLEAYAEELEKNTGQRKLNNLNTIVLELLEGFEELRNDFHPLHGDEVFKSLTGESEKTFFKGCIIPVRVERFRHNDIYGVTNSGVECVINAQRHIGAQLKRPAEEVYEIGKTYPAKVIYIDYDNISCEVSLLEHDIRRQYVPIHYSKDPSIWNVEQEMKDQEIEKKLALEEARAKRTHRVINHPYYGNFTGPQAEDYLRSRERGDFVIRQSSRGDDHLAITWKLDKDLFQHVDILEKDKENPLALGKTLIVEDQKYHDLDQIIVEYLQNKVRLLNEITSNEKFKKGTKKEVIKFIEDYSKVNPNRSVYYFSFNYEHPGWFYLMFKINAQSQLYVWNVKLTHTGFFLVNYNYPTVIQLCNGFKTLLKSSSRNKTQDNNNNNSGGYYGY.

Residues 1-21 (MSDKEDEKQSQPVLKDDKQDQ) show a composition bias toward basic and acidic residues. Disordered regions lie at residues 1–214 (MSDK…DEEA) and 268–287 (ELDR…ELGI). Composition is skewed to acidic residues over residues 36–62 (GPSD…DEEE), 71–83 (IVDD…EEDE), 98–110 (EENE…DLDL), and 141–153 (DDEE…EPES). Positions 154–163 (EVARTNKLDD) are enriched in basic and acidic residues. Composition is skewed to acidic residues over residues 164–177 (FFSE…LEDD), 196–212 (DDMD…DEDE), and 268–285 (ELDR…ENEL). The 98-residue stretch at 1257 to 1354 (PYYGNFTGPQ…RLLNEITSNE (98 aa)) folds into the SH2 domain.

It belongs to the SPT6 family.

Its subcellular location is the nucleus. The protein resides in the chromosome. Histone H3-H4 chaperone that plays a role in maintenance of chromatin structure during RNA polymerase II transcription elongation thereby repressing transcription initiation from cryptic promoters. Mediates the reassembly of nucleosomes onto the promoters of at least a selected set of genes during repression; the nucleosome reassembly is essential for transcriptional repression. Essential for viability. This chain is Transcription elongation factor SPT6 (SPT6), found in Kluyveromyces lactis (strain ATCC 8585 / CBS 2359 / DSM 70799 / NBRC 1267 / NRRL Y-1140 / WM37) (Yeast).